The primary structure comprises 172 residues: Ribosome maturation factor RimM (172 aa).

Residues D96–L168 enclose the PRC barrel domain.

It belongs to the RimM family. Binds ribosomal protein uS19.

The protein resides in the cytoplasm. In terms of biological role, an accessory protein needed during the final step in the assembly of 30S ribosomal subunit, possibly for assembly of the head region. Essential for efficient processing of 16S rRNA. May be needed both before and after RbfA during the maturation of 16S rRNA. It has affinity for free ribosomal 30S subunits but not for 70S ribosomes. This is Ribosome maturation factor RimM from Streptococcus agalactiae serotype Ia (strain ATCC 27591 / A909 / CDC SS700).